We begin with the raw amino-acid sequence, 1137 residues long: Bone sialoprotein-binding protein (1137 aa).

The signal sequence occupies residues 1-52 (MINRDNKKAITKKGMISNRLNKFSIRKYTVGTASILVGTTLIFGLGNQEAKA). The ligand binding A region stretch occupies residues 53–601 (AENTSTENAK…GDGTVKPEEK (549 aa)). Disordered regions lie at residues 54 to 249 (ENTS…TAPT) and 675 to 697 (LPTK…VTVK). A compositionally biased stretch (basic and acidic residues) spans 61-75 (AKQDEASASDNKEVV). The segment covering 77–89 (ETENNSTQKNDLT) has biased composition (polar residues). Residues 92–106 (IKKETNTDSHQEAKE) are compositionally biased toward basic and acidic residues. Residues 109-126 (TTSSTQQQQNNATTSTET) are compositionally biased toward low complexity. A compositionally biased stretch (basic and acidic residues) spans 130 to 145 (NIEKENVKPSTDKTAT). Polar residues predominate over residues 158–207 (PNNTNNDVTTKPSTSEIQTTPTTPQESTNIENSQPQPTPSKVDNQVTDAT). The span at 216 to 241 (SKEELKNNPEKLKELVRNDSNTDRST) shows a compositional bias: basic and acidic residues. CNA-B domains are found at residues 602–714 (LYKI…YKEP), 715–824 (KYNL…YKTP), and 825–935 (KYSL…EEDT). The disordered stretch occupies residues 896-1112 (TQTGTNTTED…TGSENNGSNN (217 aa)). Acidic residues-rich tracts occupy residues 903-913 (TEDDKDADGGE) and 930-1076 (YFEE…DSDS). The LPXTG sorting signal motif lies at 1100–1104 (LPETG). Position 1103 is a pentaglycyl murein peptidoglycan amidated threonine (Thr-1103). Residues 1104 to 1137 (GSENNGSNNATLFGGLFAALGSLLLFGRRKKQNK) constitute a propeptide, removed by sortase.

The protein belongs to the serine-aspartate repeat-containing protein (SDr) family.

It localises to the secreted. The protein localises to the cell wall. Its function is as follows. Specifically interacts with bone sialoprotein (BSP), a glycoprotein of bone and dentin extracellular matrix. Could contribute to staphylococcal osteomyelitis and arthritis. This is Bone sialoprotein-binding protein (bbp) from Staphylococcus aureus (strain MRSA252).